The chain runs to 786 residues: LPS-assembly protein LptD (786 aa).

The first 24 residues, 1–24 (MKKRIPTLLATMIASALYSHQGLA), serve as a signal peptide directing secretion. 2 cysteine pairs are disulfide-bonded: Cys-31–Cys-726 and Cys-173–Cys-727.

It belongs to the LptD family. In terms of assembly, component of the lipopolysaccharide transport and assembly complex. Interacts with LptE and LptA. In terms of processing, contains two intramolecular disulfide bonds.

The protein resides in the cell outer membrane. Its function is as follows. Together with LptE, is involved in the assembly of lipopolysaccharide (LPS) at the surface of the outer membrane. This chain is LPS-assembly protein LptD, found in Salmonella typhimurium (strain LT2 / SGSC1412 / ATCC 700720).